The chain runs to 295 residues: Glycine N-methyltransferase (295 aa).

V2 carries the post-translational modification N-acetylvaline. Residues S4 and Y6 each contribute to the (6S)-5-methyl-5,6,7,8-tetrahydrofolate site. Residue S10 is modified to Phosphoserine. 4 residues coordinate S-adenosyl-L-methionine: Y22, W31, Y34, and R41. Position 34 is a phosphotyrosine (Y34). At K46 the chain carries N6-succinyllysine. S-adenosyl-L-methionine is bound by residues A65, 86–88, 117–118, 139–142, and R178; these read DAS, NW, and LGNS. An N6-succinyllysine mark is found at K193, K198, and K203. Residue H217 coordinates (6S)-5-methyl-5,6,7,8-tetrahydrofolate. Y223 is a binding site for S-adenosyl-L-methionine. (6S)-5-methyl-5,6,7,8-tetrahydrofolate is bound at residue R242.

Belongs to the class I-like SAM-binding methyltransferase superfamily. Glycine N-methyltransferase family. In terms of assembly, homotetramer. As to expression, expressed only in liver, pancreas, and prostate.

The protein localises to the cytoplasm. The catalysed reaction is glycine + S-adenosyl-L-methionine = sarcosine + S-adenosyl-L-homocysteine + H(+). Inhibited by 5-methyltetrahydrofolate monoglutamate and by 5-methyltetrahydrofolate pentaglutamate, inhibition is much more effective by the pentaglutamate form than by the monoglutamate form. Two molecules of 5-methyltetrahydrofolate are bound per tetramer. The binding sites are localized between subunits. Inhibitor binding may preclude movements of the polypeptide chain that are necessary for enzyme activity. Its function is as follows. Catalyzes the methylation of glycine by using S-adenosylmethionine (AdoMet) to form N-methylglycine (sarcosine) with the concomitant production of S-adenosylhomocysteine (AdoHcy), a reaction regulated by the binding of 5-methyltetrahydrofolate. Plays an important role in the regulation of methyl group metabolism by regulating the ratio between S-adenosyl-L-methionine and S-adenosyl-L-homocysteine. The sequence is that of Glycine N-methyltransferase from Homo sapiens (Human).